A 365-amino-acid polypeptide reads, in one-letter code: Isopentenyl-diphosphate delta-isomerase (365 aa).

8-9 (RK) provides a ligand contact to substrate. FMN is bound by residues 67 to 69 (SIT), Ser97, and Asn126. 97–99 (SQR) serves as a coordination point for substrate. Gln160 provides a ligand contact to substrate. Residue Glu161 coordinates Mg(2+). FMN-binding positions include Lys192, Thr222, 272–274 (GVR), and 293–294 (AL).

The protein belongs to the IPP isomerase type 2 family. As to quaternary structure, homooctamer. Dimer of tetramers. It depends on FMN as a cofactor. NADPH serves as cofactor. The cofactor is Mg(2+).

The protein localises to the cytoplasm. The catalysed reaction is isopentenyl diphosphate = dimethylallyl diphosphate. Involved in the biosynthesis of isoprenoids. Catalyzes the 1,3-allylic rearrangement of the homoallylic substrate isopentenyl (IPP) to its allylic isomer, dimethylallyl diphosphate (DMAPP). The polypeptide is Isopentenyl-diphosphate delta-isomerase (Methanosarcina acetivorans (strain ATCC 35395 / DSM 2834 / JCM 12185 / C2A)).